A 158-amino-acid polypeptide reads, in one-letter code: Cyclic pyranopterin monophosphate synthase (158 aa).

Residues 75–77 (LCH) and 113–114 (ME) contribute to the substrate site. Aspartate 128 is a catalytic residue.

This sequence belongs to the MoaC family. In terms of assembly, homohexamer; trimer of dimers.

It catalyses the reaction (8S)-3',8-cyclo-7,8-dihydroguanosine 5'-triphosphate = cyclic pyranopterin phosphate + diphosphate. It functions in the pathway cofactor biosynthesis; molybdopterin biosynthesis. In terms of biological role, catalyzes the conversion of (8S)-3',8-cyclo-7,8-dihydroguanosine 5'-triphosphate to cyclic pyranopterin monophosphate (cPMP). This Polynucleobacter asymbioticus (strain DSM 18221 / CIP 109841 / QLW-P1DMWA-1) (Polynucleobacter necessarius subsp. asymbioticus) protein is Cyclic pyranopterin monophosphate synthase.